A 312-amino-acid chain; its full sequence is Protoheme IX farnesyltransferase 2 (312 aa).

Transmembrane regions (helical) follow at residues 31 to 51 (VMSL…GHIH), 52 to 72 (PVLG…SGAL), 119 to 139 (ALVN…YVVI), 152 to 172 (IVIG…AATG), 179 to 199 (LLLF…LALF), 225 to 245 (ILLY…LGYF), 247 to 267 (WVYG…AIEV), and 283 to 303 (LFAF…LDVV).

Belongs to the UbiA prenyltransferase family. Protoheme IX farnesyltransferase subfamily.

It localises to the cell inner membrane. The enzyme catalyses heme b + (2E,6E)-farnesyl diphosphate + H2O = Fe(II)-heme o + diphosphate. The protein operates within porphyrin-containing compound metabolism; heme O biosynthesis; heme O from protoheme: step 1/1. Functionally, converts heme B (protoheme IX) to heme O by substitution of the vinyl group on carbon 2 of heme B porphyrin ring with a hydroxyethyl farnesyl side group. This Nitrobacter winogradskyi (strain ATCC 25391 / DSM 10237 / CIP 104748 / NCIMB 11846 / Nb-255) protein is Protoheme IX farnesyltransferase 2.